Here is a 270-residue protein sequence, read N- to C-terminus: Bis(5'-nucleosyl)-tetraphosphatase, symmetrical (270 aa).

The protein belongs to the Ap4A hydrolase family.

The catalysed reaction is P(1),P(4)-bis(5'-adenosyl) tetraphosphate + H2O = 2 ADP + 2 H(+). Its function is as follows. Hydrolyzes diadenosine 5',5'''-P1,P4-tetraphosphate to yield ADP. This Haemophilus ducreyi (strain 35000HP / ATCC 700724) protein is Bis(5'-nucleosyl)-tetraphosphatase, symmetrical.